Consider the following 447-residue polypeptide: Alkylglycerol monooxygenase (447 aa).

The next 2 helical transmembrane spans lie at alanine 43–glycine 63 and tryptophan 111–phenylalanine 131. The 132-residue stretch at tyrosine 118 to threonine 249 folds into the Fatty acid hydroxylase domain. The short motif at histidine 132–histidine 136 is the Histidine box-1 element. Positions histidine 145 to histidine 149 match the Histidine box-2 motif. The chain crosses the membrane as a helical span at residues serine 170–isoleucine 190. A Histidine box-3 motif is present at residues histidine 221–histidine 225. The next 3 membrane-spanning stretches (helical) occupy residues phenylalanine 334–phenylalanine 354, valine 363–leucine 383, and isoleucine 413–valine 433.

Belongs to the sterol desaturase family. TMEM195 subfamily. It depends on Fe cation as a cofactor.

It is found in the endoplasmic reticulum membrane. It catalyses the reaction 1-O-(1,2-saturated-alkyl)-sn-glycerol + (6R)-L-erythro-5,6,7,8-tetrahydrobiopterin + O2 = a 1-(1-hydroxyalkyl)-sn-glycerol + (6R)-L-erythro-6,7-dihydrobiopterin + H2O. Its function is as follows. Glyceryl-ether monooxygenase that cleaves the O-alkyl bond of ether lipids. Ether lipids are essential components of brain membranes. The polypeptide is Alkylglycerol monooxygenase (Agmo) (Rattus norvegicus (Rat)).